Here is a 299-residue protein sequence, read N- to C-terminus: ATP phosphoribosyltransferase (299 aa).

Belongs to the ATP phosphoribosyltransferase family. Long subfamily. As to quaternary structure, equilibrium between an active dimeric form, an inactive hexameric form and higher aggregates. Interconversion between the various forms is largely reversible and is influenced by the natural substrates and inhibitors of the enzyme. It depends on Mg(2+) as a cofactor.

The protein localises to the cytoplasm. The enzyme catalyses 1-(5-phospho-beta-D-ribosyl)-ATP + diphosphate = 5-phospho-alpha-D-ribose 1-diphosphate + ATP. The protein operates within amino-acid biosynthesis; L-histidine biosynthesis; L-histidine from 5-phospho-alpha-D-ribose 1-diphosphate: step 1/9. Feedback inhibited by histidine. Catalyzes the condensation of ATP and 5-phosphoribose 1-diphosphate to form N'-(5'-phosphoribosyl)-ATP (PR-ATP). Has a crucial role in the pathway because the rate of histidine biosynthesis seems to be controlled primarily by regulation of HisG enzymatic activity. The protein is ATP phosphoribosyltransferase of Erwinia tasmaniensis (strain DSM 17950 / CFBP 7177 / CIP 109463 / NCPPB 4357 / Et1/99).